The chain runs to 396 residues: Bone morphogenetic protein 2 (396 aa).

Residues 1–23 form the signal peptide; it reads MVAGTRCLLALLLPQVLLGGAAG. Positions 24–282 are cleaved as a propeptide — cleaved by PCSK5; it reads LIPELGRRKF…GHPLHRREKR (259 aa). S87 is subject to Phosphoserine. N-linked (GlcNAc...) asparagine glycans are attached at residues N135, N163, N164, and N200. The segment at 272-293 is disordered; sequence KGHPLHRREKRQAKHKQRKRLK. Residues 274-293 are compositionally biased toward basic residues; it reads HPLHRREKRQAKHKQRKRLK. Disulfide bonds link C296–C361, C325–C393, and C329–C395. A glycan (N-linked (GlcNAc...) asparagine) is linked at N338.

It belongs to the TGF-beta family. In terms of assembly, homodimer; disulfide-linked. Interacts with SOSTDC1. Interacts with GREM2, RGMA, RGMB and RGMC. Interacts with ASPN. Interacts with MAFP5. Interacts with FBN1 (via N-terminal domain) and FBN2. Interacts with type I receptor BMPR1A. Interacts with type II receptor BMPR2. Interacts with ERFE. Interacts with BMPR1A/ALK3; the interaction may induce HAMP expression. Interacts with TGFBR3.

It localises to the secreted. In terms of biological role, growth factor of the TGF-beta superfamily that plays essential roles in many developmental processes, including cardiogenesis, neurogenesis, and osteogenesis. Induces cartilage and bone formation. Initiates the canonical BMP signaling cascade by associating with type I receptor BMPR1A and type II receptor BMPR2. Once all three components are bound together in a complex at the cell surface, BMPR2 phosphorylates and activates BMPR1A. In turn, BMPR1A propagates signal by phosphorylating SMAD1/5/8 that travel to the nucleus and act as activators and repressors of transcription of target genes. Also acts to promote expression of HAMP, via the interaction with its receptor BMPR1A/ALK3. Can also signal through non-canonical pathways such as ERK/MAP kinase signaling cascade that regulates osteoblast differentiation. Also stimulates the differentiation of myoblasts into osteoblasts via the EIF2AK3-EIF2A-ATF4 pathway by stimulating EIF2A phosphorylation which leads to increased expression of ATF4 which plays a central role in osteoblast differentiation. Acts as a positive regulator of odontoblast differentiation during mesenchymal tooth germ formation, expression is repressed during the bell stage by MSX1-mediated inhibition of CTNNB1 signaling. The sequence is that of Bone morphogenetic protein 2 (BMP2) from Dama dama (Fallow deer).